The chain runs to 613 residues: DBH-like monooxygenase protein 1 (613 aa).

The first 19 residues, methionine 1–glycine 19, serve as a signal peptide directing secretion. The Lumenal segment spans residues serine 20–proline 587. Residues glycine 35 to histidine 148 enclose the DOMON domain. Asparagine 114 carries an N-linked (GlcNAc...) asparagine glycan. The active site involves tyrosine 203. 2 disulfides stabilise this stretch: cysteine 205–cysteine 257 and cysteine 242–cysteine 269. Cu cation is bound by residues histidine 235 and histidine 236. N-linked (GlcNAc...) asparagine glycosylation occurs at asparagine 247. 4 residues coordinate Cu cation: histidine 307, histidine 389, histidine 391, and methionine 464. Cystine bridges form between cysteine 364–cysteine 480, cysteine 368–cysteine 550, and cysteine 443–cysteine 465. The active site involves histidine 389. Residues asparagine 476 and asparagine 517 are each glycosylated (N-linked (GlcNAc...) asparagine). Residues proline 588–leucine 608 traverse the membrane as a helical segment.

This sequence belongs to the copper type II ascorbate-dependent monooxygenase family. Cu(2+) serves as cofactor. Post-translationally, N-glycosylated. Broadly exprressed, with highest levels in salivary gland and ovary.

The protein localises to the endoplasmic reticulum membrane. The chain is DBH-like monooxygenase protein 1 (Moxd1) from Mus musculus (Mouse).